We begin with the raw amino-acid sequence, 120 residues long: Aspartate 1-decarboxylase (120 aa).

The active-site Schiff-base intermediate with substrate; via pyruvic acid is the S25. S25 carries the pyruvic acid (Ser) modification. Residue T57 participates in substrate binding. The active-site Proton donor is the Y58. 73 to 75 (GAA) contacts substrate.

Belongs to the PanD family. Heterooctamer of four alpha and four beta subunits. The cofactor is pyruvate. Is synthesized initially as an inactive proenzyme, which is activated by self-cleavage at a specific serine bond to produce a beta-subunit with a hydroxyl group at its C-terminus and an alpha-subunit with a pyruvoyl group at its N-terminus.

It localises to the cytoplasm. The catalysed reaction is L-aspartate + H(+) = beta-alanine + CO2. It participates in cofactor biosynthesis; (R)-pantothenate biosynthesis; beta-alanine from L-aspartate: step 1/1. Its function is as follows. Catalyzes the pyruvoyl-dependent decarboxylation of aspartate to produce beta-alanine. This chain is Aspartate 1-decarboxylase, found in Thermosipho africanus (strain TCF52B).